The primary structure comprises 558 residues: Glucose-6-phosphate isomerase (558 aa).

Lys12 carries the N6-acetyllysine modification. A phosphoserine mark is found at Ser86 and Ser107. At Lys142 the chain carries N6-acetyllysine. Position 159–160 (159–160 (GS)) interacts with D-glucose 6-phosphate. A Phosphoserine; by CK2 modification is found at Ser185. 210–215 (SKTFTT) contributes to the D-glucose 6-phosphate binding site. A Phosphothreonine modification is found at Thr250. Residues Gln354, Glu358, and His389 each contribute to the D-glucose 6-phosphate site. Catalysis depends on Glu358, which acts as the Proton donor. His389 is an active-site residue. Position 454 is an N6-acetyllysine; alternate (Lys454). Lys454 is subject to N6-malonyllysine; alternate. Lys454 carries the post-translational modification N6-succinyllysine; alternate. Phosphoserine is present on Ser455. A D-glucose 6-phosphate-binding site is contributed by Lys519. Lys519 is an active-site residue.

The protein belongs to the GPI family. As to quaternary structure, homodimer; in the catalytically active form. Monomer in the secreted form. In terms of processing, phosphorylation at Ser-185 by CK2 has been shown to decrease enzymatic activity and may contribute to secretion by a non-classical secretory pathway. Post-translationally, ISGylated.

Its subcellular location is the cytoplasm. The protein localises to the secreted. The enzyme catalyses alpha-D-glucose 6-phosphate = beta-D-fructose 6-phosphate. Its pathway is carbohydrate degradation; glycolysis; D-glyceraldehyde 3-phosphate and glycerone phosphate from D-glucose: step 2/4. In the cytoplasm, catalyzes the conversion of glucose-6-phosphate to fructose-6-phosphate, the second step in glycolysis, and the reverse reaction during gluconeogenesis. Besides it's role as a glycolytic enzyme, also acts as a secreted cytokine: acts as an angiogenic factor (AMF) that stimulates endothelial cell motility. Acts as a neurotrophic factor, neuroleukin, for spinal and sensory neurons. It is secreted by lectin-stimulated T-cells and induces immunoglobulin secretion. The protein is Glucose-6-phosphate isomerase of Cricetulus griseus (Chinese hamster).